A 255-amino-acid chain; its full sequence is Imidazole glycerol phosphate synthase subunit HisF (255 aa).

Catalysis depends on residues Asp-12 and Asp-131.

It belongs to the HisA/HisF family. Heterodimer of HisH and HisF.

Its subcellular location is the cytoplasm. It catalyses the reaction 5-[(5-phospho-1-deoxy-D-ribulos-1-ylimino)methylamino]-1-(5-phospho-beta-D-ribosyl)imidazole-4-carboxamide + L-glutamine = D-erythro-1-(imidazol-4-yl)glycerol 3-phosphate + 5-amino-1-(5-phospho-beta-D-ribosyl)imidazole-4-carboxamide + L-glutamate + H(+). The protein operates within amino-acid biosynthesis; L-histidine biosynthesis; L-histidine from 5-phospho-alpha-D-ribose 1-diphosphate: step 5/9. Its function is as follows. IGPS catalyzes the conversion of PRFAR and glutamine to IGP, AICAR and glutamate. The HisF subunit catalyzes the cyclization activity that produces IGP and AICAR from PRFAR using the ammonia provided by the HisH subunit. In Salinispora tropica (strain ATCC BAA-916 / DSM 44818 / JCM 13857 / NBRC 105044 / CNB-440), this protein is Imidazole glycerol phosphate synthase subunit HisF.